A 36-amino-acid chain; its full sequence is Insecticidal toxin LaIT1 (36 aa).

2 disulfide bridges follow: C11–C23 and C17–C29.

Expressed by the venom gland.

The protein resides in the secreted. Its function is as follows. Affects the activity of both ryanodine-sensitive calcium-release channels RyR1 and RyR2 with high potency. At lower concentrations the toxin increases full openings of the RyRs, and at higher concentrations it inhibits full openings and induce openings to subconductance levels and reduces the number of full conductance openings. The different actions may be attributed to the toxins binding at different sites on the RyRs, with binding at a high-affinity site mediating the increase in full openings and the induction of subconductance states evoked upon binding to a lower-affinity site. Shows insect lethality against crickets and common cutworms (only shows paralysis against cockroaches), but no toxicity is observed in mice. In Liocheles australasiae (Dwarf wood scorpion), this protein is Insecticidal toxin LaIT1.